Here is a 354-residue protein sequence, read N- to C-terminus: Probable L-ascorbate-6-phosphate lactonase UlaG (354 aa).

Belongs to the UlaG family. A divalent metal cation serves as cofactor.

The protein resides in the cytoplasm. It catalyses the reaction L-ascorbate 6-phosphate + H2O = 3-dehydro-L-gulonate 6-phosphate. It functions in the pathway cofactor degradation; L-ascorbate degradation; D-xylulose 5-phosphate from L-ascorbate: step 1/4. In terms of biological role, probably catalyzes the hydrolysis of L-ascorbate-6-P into 3-keto-L-gulonate-6-P. Is essential for L-ascorbate utilization under anaerobic conditions. This Escherichia coli O139:H28 (strain E24377A / ETEC) protein is Probable L-ascorbate-6-phosphate lactonase UlaG.